Here is a 146-residue protein sequence, read N- to C-terminus: UPF0178 protein BAMEG_1545 (146 aa).

This sequence belongs to the UPF0178 family.

This Bacillus anthracis (strain CDC 684 / NRRL 3495) protein is UPF0178 protein BAMEG_1545.